Reading from the N-terminus, the 337-residue chain is ADP-ribosylation factor GTPase-activating protein AGD12 (337 aa).

Residues 15 to 137 (KRRIRDLLTQ…EFLKPSLRIT (123 aa)) form the Arf-GAP domain. A C4-type zinc finger spans residues 30–53 (CADCGAPDPKWASANIGVFICLKC). The C2 domain maps to 164–281 (TNSSSQQPQL…AMAFGDPEMF (118 aa)). Ca(2+) contacts are provided by aspartate 250, serine 253, and aspartate 256.

Ca(2+) serves as cofactor. In terms of tissue distribution, expressed in roots, leaves, flowers and siliques. Low levels of expression in seeds and stems.

It is found in the golgi apparatus. The protein resides in the cell membrane. Functionally, GTPase-activating protein (GAP) for ADP ribosylation factor (ARF). Binds phosphatidylinositol 3-monophosohate (PI-3-P) and anionic phospholipids. The protein is ADP-ribosylation factor GTPase-activating protein AGD12 (AGD12) of Arabidopsis thaliana (Mouse-ear cress).